We begin with the raw amino-acid sequence, 222 residues long: Octanoyltransferase (222 aa).

One can recognise a BPL/LPL catalytic domain in the interval 32-207 (RDRPDVLMLL…AFARVFGVQC (176 aa)). Residues 72 to 79 (RGGEVTYH), 139 to 141 (ALG), and 152 to 154 (GFA) contribute to the substrate site. Cysteine 170 (acyl-thioester intermediate) is an active-site residue.

Belongs to the LipB family.

The protein resides in the cytoplasm. It catalyses the reaction octanoyl-[ACP] + L-lysyl-[protein] = N(6)-octanoyl-L-lysyl-[protein] + holo-[ACP] + H(+). It participates in protein modification; protein lipoylation via endogenous pathway; protein N(6)-(lipoyl)lysine from octanoyl-[acyl-carrier-protein]: step 1/2. In terms of biological role, catalyzes the transfer of endogenously produced octanoic acid from octanoyl-acyl-carrier-protein onto the lipoyl domains of lipoate-dependent enzymes. Lipoyl-ACP can also act as a substrate although octanoyl-ACP is likely to be the physiological substrate. The sequence is that of Octanoyltransferase from Gloeobacter violaceus (strain ATCC 29082 / PCC 7421).